Reading from the N-terminus, the 560-residue chain is Dihydroxy-acid dehydratase (560 aa).

Position 50 (cysteine 50) interacts with [2Fe-2S] cluster. Residue aspartate 82 coordinates Mg(2+). [2Fe-2S] cluster is bound at residue cysteine 123. 2 residues coordinate Mg(2+): aspartate 124 and lysine 125. Lysine 125 carries the post-translational modification N6-carboxylysine. Cysteine 195 provides a ligand contact to [2Fe-2S] cluster. Position 447 (glutamate 447) interacts with Mg(2+). Catalysis depends on serine 473, which acts as the Proton acceptor.

It belongs to the IlvD/Edd family. As to quaternary structure, homodimer. The cofactor is [2Fe-2S] cluster. Requires Mg(2+) as cofactor.

It carries out the reaction (2R)-2,3-dihydroxy-3-methylbutanoate = 3-methyl-2-oxobutanoate + H2O. It catalyses the reaction (2R,3R)-2,3-dihydroxy-3-methylpentanoate = (S)-3-methyl-2-oxopentanoate + H2O. Its pathway is amino-acid biosynthesis; L-isoleucine biosynthesis; L-isoleucine from 2-oxobutanoate: step 3/4. It participates in amino-acid biosynthesis; L-valine biosynthesis; L-valine from pyruvate: step 3/4. Functions in the biosynthesis of branched-chain amino acids. Catalyzes the dehydration of (2R,3R)-2,3-dihydroxy-3-methylpentanoate (2,3-dihydroxy-3-methylvalerate) into 2-oxo-3-methylpentanoate (2-oxo-3-methylvalerate) and of (2R)-2,3-dihydroxy-3-methylbutanoate (2,3-dihydroxyisovalerate) into 2-oxo-3-methylbutanoate (2-oxoisovalerate), the penultimate precursor to L-isoleucine and L-valine, respectively. This Methylibium petroleiphilum (strain ATCC BAA-1232 / LMG 22953 / PM1) protein is Dihydroxy-acid dehydratase.